The primary structure comprises 188 residues: Archaemetzincin (188 aa).

A Zn(2+)-binding site is contributed by His137. Glu138 (proton acceptor) is an active-site residue. Zn(2+) is bound by residues His141, His147, Cys148, Cys153, Cys172, and Cys175.

This sequence belongs to the peptidase M54 family. As to quaternary structure, monomer. The cofactor is Zn(2+).

In terms of biological role, probable zinc metalloprotease whose natural substrate is unknown. This Pyrococcus horikoshii (strain ATCC 700860 / DSM 12428 / JCM 9974 / NBRC 100139 / OT-3) protein is Archaemetzincin.